The primary structure comprises 375 residues: uncharacterized protein (375 aa).

Transmembrane regions (helical) follow at residues 21–41, 66–86, 160–180, 203–223, 234–254, 289–309, and 338–358; these read LLLL…IVLF, IIVF…FCVS, LVGV…PGIV, LVGL…HLLI, FYMV…FHLF, VISF…YFLI, and FFLM…MLFF.

The protein localises to the cell membrane. This is an uncharacterized protein from Mycoplasma genitalium (strain ATCC 33530 / DSM 19775 / NCTC 10195 / G37) (Mycoplasmoides genitalium).